The sequence spans 287 residues: Phosphatidylglycerol--prolipoprotein diacylglyceryl transferase (287 aa).

4 helical membrane-spanning segments follow: residues 15-35 (IGPL…ILAI), 55-75 (FVMF…VFFE), 90-110 (IWEG…TAIV), and 117-137 (VSFW…QAIG). Arg-138 lines the a 1,2-diacyl-sn-glycero-3-phospho-(1'-sn-glycerol) pocket. 2 helical membrane passes run 180 to 200 (HPTF…LLLL) and 238 to 258 (IIRT…IFII).

It belongs to the Lgt family.

It is found in the cell membrane. The catalysed reaction is L-cysteinyl-[prolipoprotein] + a 1,2-diacyl-sn-glycero-3-phospho-(1'-sn-glycerol) = an S-1,2-diacyl-sn-glyceryl-L-cysteinyl-[prolipoprotein] + sn-glycerol 1-phosphate + H(+). Its pathway is protein modification; lipoprotein biosynthesis (diacylglyceryl transfer). Functionally, catalyzes the transfer of the diacylglyceryl group from phosphatidylglycerol to the sulfhydryl group of the N-terminal cysteine of a prolipoprotein, the first step in the formation of mature lipoproteins. The polypeptide is Phosphatidylglycerol--prolipoprotein diacylglyceryl transferase (Oceanobacillus iheyensis (strain DSM 14371 / CIP 107618 / JCM 11309 / KCTC 3954 / HTE831)).